The following is a 422-amino-acid chain: Tyrosine--tRNA ligase (422 aa).

Y36 contacts L-tyrosine. Residues 41-50 carry the 'HIGH' region motif; the sequence is PTADSLHIGH. L-tyrosine-binding residues include Y175 and Q179. The 'KMSKS' region motif lies at 235 to 239; that stretch reads KFGKT. K238 serves as a coordination point for ATP. Positions 354–411 constitute an S4 RNA-binding domain; that stretch reads TSLQEALTKSKLATSRSQARYFIKSNAITINAHKQSKIEYIFQDSDRIYNLYTLLKRG.

Belongs to the class-I aminoacyl-tRNA synthetase family. TyrS type 1 subfamily. In terms of assembly, homodimer.

It localises to the cytoplasm. It carries out the reaction tRNA(Tyr) + L-tyrosine + ATP = L-tyrosyl-tRNA(Tyr) + AMP + diphosphate + H(+). In terms of biological role, catalyzes the attachment of tyrosine to tRNA(Tyr) in a two-step reaction: tyrosine is first activated by ATP to form Tyr-AMP and then transferred to the acceptor end of tRNA(Tyr). In Blochmanniella floridana, this protein is Tyrosine--tRNA ligase.